Reading from the N-terminus, the 1102-residue chain is Putative helicase/primase complex protein (1102 aa).

Disordered stretches follow at residues 1031 to 1057 and 1082 to 1102; these read TKEEISSTKEETYSTKEETYSTKEETC and EETCSIKEETSSIKEETFTET.

This sequence belongs to the asfivirus F1055L family.

Its function is as follows. May be involved in DNA replication. The sequence is that of Putative helicase/primase complex protein from African swine fever virus (isolate Tick/Malawi/Lil 20-1/1983) (ASFV).